We begin with the raw amino-acid sequence, 339 residues long: Glycerol-3-phosphate dehydrogenase [NAD(P)+] (339 aa).

4 residues coordinate NADPH: Ser-15, Tyr-16, His-36, and Lys-110. Sn-glycerol 3-phosphate-binding residues include Lys-110, Gly-139, and Thr-141. Ala-143 is an NADPH binding site. Sn-glycerol 3-phosphate-binding residues include Lys-195, Asp-248, Ser-258, Arg-259, and Asn-260. The Proton acceptor role is filled by Lys-195. Arg-259 is a binding site for NADPH. NADPH contacts are provided by Val-283 and Glu-285.

The protein belongs to the NAD-dependent glycerol-3-phosphate dehydrogenase family.

It localises to the cytoplasm. The catalysed reaction is sn-glycerol 3-phosphate + NAD(+) = dihydroxyacetone phosphate + NADH + H(+). It catalyses the reaction sn-glycerol 3-phosphate + NADP(+) = dihydroxyacetone phosphate + NADPH + H(+). It participates in membrane lipid metabolism; glycerophospholipid metabolism. Functionally, catalyzes the reduction of the glycolytic intermediate dihydroxyacetone phosphate (DHAP) to sn-glycerol 3-phosphate (G3P), the key precursor for phospholipid synthesis. In Shigella flexneri serotype 5b (strain 8401), this protein is Glycerol-3-phosphate dehydrogenase [NAD(P)+].